The chain runs to 182 residues: MIKAPNIILVGPMGAGKTTIGRLISQSMGKEFYDLDKVIEDNAGADIPWIFEREGEDGFRKRETQALASIVESDTGDCVLATGGGIVMREENRDILRENALVVYLYASVAQQLYRTSKSTHRPLLQTGDPRATLKKLFEIRDPLYRDVATLVIETDSRHPRSVANKVLDAIKRHLKMEITVS.

14–19 (GAGKTT) contributes to the ATP binding site. Residue Thr18 participates in Mg(2+) binding. Residues Asp36, Arg60, and Gly84 each coordinate substrate. Arg122 contacts ATP. Position 141 (Arg141) interacts with substrate.

This sequence belongs to the shikimate kinase family. Monomer. Mg(2+) is required as a cofactor.

The protein resides in the cytoplasm. The enzyme catalyses shikimate + ATP = 3-phosphoshikimate + ADP + H(+). Its pathway is metabolic intermediate biosynthesis; chorismate biosynthesis; chorismate from D-erythrose 4-phosphate and phosphoenolpyruvate: step 5/7. Catalyzes the specific phosphorylation of the 3-hydroxyl group of shikimic acid using ATP as a cosubstrate. The sequence is that of Shikimate kinase from Marinomonas sp. (strain MWYL1).